Consider the following 160-residue polypeptide: Cytochrome b6-f complex subunit 4 (160 aa).

3 helical membrane-spanning segments follow: residues 36 to 56 (LLYT…GLAV), 95 to 115 (LLGV…PFIE), and 131 to 151 (TVFL…TLPI).

The protein belongs to the cytochrome b family. PetD subfamily. In terms of assembly, the 4 large subunits of the cytochrome b6-f complex are cytochrome b6, subunit IV (17 kDa polypeptide, petD), cytochrome f and the Rieske protein, while the 4 small subunits are petG, petL, petM and petN. The complex functions as a dimer.

It localises to the plastid. The protein resides in the chloroplast thylakoid membrane. Component of the cytochrome b6-f complex, which mediates electron transfer between photosystem II (PSII) and photosystem I (PSI), cyclic electron flow around PSI, and state transitions. The polypeptide is Cytochrome b6-f complex subunit 4 (Mesostigma viride (Green alga)).